Reading from the N-terminus, the 393-residue chain is Formate-dependent phosphoribosylglycinamide formyltransferase (393 aa).

N(1)-(5-phospho-beta-D-ribosyl)glycinamide-binding positions include 22–23 (EL) and Glu82. Residues Arg114, Lys155, 160 to 165 (SSGKGQ), 195 to 198 (EGLV), and Glu203 each bind ATP. Residues 119–308 (RLAAETLQLP…EFALHVRAFL (190 aa)) enclose the ATP-grasp domain. Mg(2+)-binding residues include Glu267 and Glu279. Residues Asp286, Lys355, and 362-363 (RR) contribute to the N(1)-(5-phospho-beta-D-ribosyl)glycinamide site.

It belongs to the PurK/PurT family. In terms of assembly, homodimer.

The catalysed reaction is N(1)-(5-phospho-beta-D-ribosyl)glycinamide + formate + ATP = N(2)-formyl-N(1)-(5-phospho-beta-D-ribosyl)glycinamide + ADP + phosphate + H(+). The protein operates within purine metabolism; IMP biosynthesis via de novo pathway; N(2)-formyl-N(1)-(5-phospho-D-ribosyl)glycinamide from N(1)-(5-phospho-D-ribosyl)glycinamide (formate route): step 1/1. Functionally, involved in the de novo purine biosynthesis. Catalyzes the transfer of formate to 5-phospho-ribosyl-glycinamide (GAR), producing 5-phospho-ribosyl-N-formylglycinamide (FGAR). Formate is provided by PurU via hydrolysis of 10-formyl-tetrahydrofolate. The polypeptide is Formate-dependent phosphoribosylglycinamide formyltransferase (Yersinia pseudotuberculosis serotype O:3 (strain YPIII)).